The primary structure comprises 57 residues: Protein translocase subunit SecE (57 aa).

The chain crosses the membrane as a helical span at residues 33–53 (GAGIFLVGLLGFIIFAVMSFL).

Belongs to the SecE/SEC61-gamma family. As to quaternary structure, component of the Sec protein translocase complex. Heterotrimer consisting of SecY (alpha), SecG (beta) and SecE (gamma) subunits. The heterotrimers can form oligomers, although 1 heterotrimer is thought to be able to translocate proteins. Interacts with the ribosome. May interact with SecDF, and other proteins may be involved.

The protein localises to the cell membrane. In terms of biological role, essential subunit of the Sec protein translocation channel SecYEG. Clamps together the 2 halves of SecY. May contact the channel plug during translocation. The protein is Protein translocase subunit SecE of Haloferax mediterranei (strain ATCC 33500 / DSM 1411 / JCM 8866 / NBRC 14739 / NCIMB 2177 / R-4) (Halobacterium mediterranei).